Reading from the N-terminus, the 174-residue chain is Large ribosomal subunit protein uL10 (174 aa).

This sequence belongs to the universal ribosomal protein uL10 family. As to quaternary structure, part of the ribosomal stalk of the 50S ribosomal subunit. The N-terminus interacts with L11 and the large rRNA to form the base of the stalk. The C-terminus forms an elongated spine to which L12 dimers bind in a sequential fashion forming a multimeric L10(L12)X complex.

Its function is as follows. Forms part of the ribosomal stalk, playing a central role in the interaction of the ribosome with GTP-bound translation factors. In Pelobacter propionicus (strain DSM 2379 / NBRC 103807 / OttBd1), this protein is Large ribosomal subunit protein uL10.